Consider the following 103-residue polypeptide: Co-chaperonin GroES (103 aa).

Belongs to the GroES chaperonin family. As to quaternary structure, heptamer of 7 subunits arranged in a ring. Interacts with the chaperonin GroEL.

The protein resides in the cytoplasm. Its function is as follows. Together with the chaperonin GroEL, plays an essential role in assisting protein folding. The GroEL-GroES system forms a nano-cage that allows encapsulation of the non-native substrate proteins and provides a physical environment optimized to promote and accelerate protein folding. GroES binds to the apical surface of the GroEL ring, thereby capping the opening of the GroEL channel. This chain is Co-chaperonin GroES, found in Nostoc punctiforme (strain ATCC 29133 / PCC 73102).